The following is a 114-amino-acid chain: NAD(P)H-quinone oxidoreductase subunit M (114 aa).

It belongs to the complex I NdhM subunit family. NDH-1 can be composed of about 15 different subunits; different subcomplexes with different compositions have been identified which probably have different functions.

The protein localises to the cellular thylakoid membrane. The catalysed reaction is a plastoquinone + NADH + (n+1) H(+)(in) = a plastoquinol + NAD(+) + n H(+)(out). It catalyses the reaction a plastoquinone + NADPH + (n+1) H(+)(in) = a plastoquinol + NADP(+) + n H(+)(out). Functionally, NDH-1 shuttles electrons from an unknown electron donor, via FMN and iron-sulfur (Fe-S) centers, to quinones in the respiratory and/or the photosynthetic chain. The immediate electron acceptor for the enzyme in this species is believed to be plastoquinone. Couples the redox reaction to proton translocation, and thus conserves the redox energy in a proton gradient. Cyanobacterial NDH-1 also plays a role in inorganic carbon-concentration. This chain is NAD(P)H-quinone oxidoreductase subunit M, found in Acaryochloris marina (strain MBIC 11017).